The chain runs to 702 residues: MRYSHPLVPLSFMTTALVTTALPYANGPLHLGHLVGYIQADIWVRARRLGGHNTWFVCADDTHGTPIMLAAEKAGMPPEAFIATTQASHERDFAAFNVAFDHYDSTHSPVNRHLTEQSYLTLKQAGHITCRSVAQFYDPAKGMFLPDRYVKGTCPNCGATDQYGDNCEACGATYDPTELKNPYSVISGATPELRDSEHFFFEVAHFDTFLRHWLSGDVALPSVKNKLKEWLDAKGGLRPWDISRDAPYFGFKIPDQPGKYFYVWLDAPIGYLCSFKTLCTRIGEDFDTHLRSGTTTELHHFIGKDIVNFHALFWPAVLHGTGHRAPTRLHVNGYLTVDGAKMSKSRGTFIMARTYLDAGLEPDALRYYFAAKSSGDVDDLDLNLSDFVARVNADLVGKLVNLASRCASFIGTRFNGQLADTLPDRIQYDRFVAALTPIRDAYERNDTASAIRQTMQLADEANKYIDETKPWIIAKQHHADAQLHAVCTQGLNLFRVLITALKPILPHTSIQAETFLAAPVTAWQDVNQPLTGGHTIQPYSPLFTRIDKKIIEVMINASKDTLAPPPASAKQQNASMSNTAPPPTAEEPETTAPTIGIDDFAKLDLRIGKVLVCEYVEGSDKLLRFELDAGPLGKRQIFSGIRASYSNPEALIGRNVVFIANLAPRKMRFGISQGMILSAGFDNGTLALLDADSSAQPGMPVR.

The 'HIGH' region motif lies at 23-33; the sequence is PYANGPLHLGH. Residues C154, C157, C167, and C170 each coordinate Zn(2+). The 'KMSKS' region motif lies at 341–345; sequence KMSKS. An ATP-binding site is contributed by K344. The interval 562–593 is disordered; it reads LAPPPASAKQQNASMSNTAPPPTAEEPETTAP. Over residues 569–578 the composition is skewed to polar residues; it reads AKQQNASMSN. Residues 599-702 form the tRNA-binding domain; the sequence is DFAKLDLRIG…SSAQPGMPVR (104 aa).

It belongs to the class-I aminoacyl-tRNA synthetase family. MetG type 1 subfamily. As to quaternary structure, homodimer. Zn(2+) is required as a cofactor.

The protein localises to the cytoplasm. It catalyses the reaction tRNA(Met) + L-methionine + ATP = L-methionyl-tRNA(Met) + AMP + diphosphate. Its function is as follows. Is required not only for elongation of protein synthesis but also for the initiation of all mRNA translation through initiator tRNA(fMet) aminoacylation. The sequence is that of Methionine--tRNA ligase from Xylella fastidiosa (strain M23).